Reading from the N-terminus, the 350-residue chain is DNA-directed RNA polymerase subunit alpha (350 aa).

The alpha N-terminal domain (alpha-NTD) stretch occupies residues 1 to 226 (MLISQRPTLS…ELFGLARELN (226 aa)). Positions 241-350 (ADHIASFALP…NQDYAETEQL (110 aa)) are alpha C-terminal domain (alpha-CTD). Residues 326–350 (ATGTWNSDAGYDLEDNQDYAETEQL) are disordered. The span at 336–350 (YDLEDNQDYAETEQL) shows a compositional bias: acidic residues.

It belongs to the RNA polymerase alpha chain family. Homodimer. The RNAP catalytic core consists of 2 alpha, 1 beta, 1 beta' and 1 omega subunit. When a sigma factor is associated with the core the holoenzyme is formed, which can initiate transcription.

The enzyme catalyses RNA(n) + a ribonucleoside 5'-triphosphate = RNA(n+1) + diphosphate. DNA-dependent RNA polymerase catalyzes the transcription of DNA into RNA using the four ribonucleoside triphosphates as substrates. The sequence is that of DNA-directed RNA polymerase subunit alpha from Mycobacterium sp. (strain JLS).